We begin with the raw amino-acid sequence, 207 residues long: Large ribosomal subunit protein uL4 (207 aa).

It belongs to the universal ribosomal protein uL4 family. Part of the 50S ribosomal subunit.

Its function is as follows. One of the primary rRNA binding proteins, this protein initially binds near the 5'-end of the 23S rRNA. It is important during the early stages of 50S assembly. It makes multiple contacts with different domains of the 23S rRNA in the assembled 50S subunit and ribosome. Functionally, forms part of the polypeptide exit tunnel. The protein is Large ribosomal subunit protein uL4 of Pelagibacter ubique (strain HTCC1062).